Here is a 273-residue protein sequence, read N- to C-terminus: Phosphatidylglycerol--prolipoprotein diacylglyceryl transferase (273 aa).

7 consecutive transmembrane segments (helical) span residues 21 to 41 (VSVRWYGLMYLVGFMFALWLA), 60 to 80 (LLFAGFLGVVIGGRVGYVIFY), 95 to 115 (VWTGGMSFHGGLLGVITAMFW), 124 to 144 (FFGVADFVAPLVPFGLGMGRM), 176 to 196 (SQLYEMFLEGIVLFFILNWFI), 203 to 223 (GAVSGLFLAGYGTFRFLVEFV), and 237 to 257 (ISMGQILSSPMIILGILMMVW). Position 143 (arginine 143) interacts with a 1,2-diacyl-sn-glycero-3-phospho-(1'-sn-glycerol).

The protein belongs to the Lgt family.

The protein localises to the cell inner membrane. The enzyme catalyses L-cysteinyl-[prolipoprotein] + a 1,2-diacyl-sn-glycero-3-phospho-(1'-sn-glycerol) = an S-1,2-diacyl-sn-glyceryl-L-cysteinyl-[prolipoprotein] + sn-glycerol 1-phosphate + H(+). The protein operates within protein modification; lipoprotein biosynthesis (diacylglyceryl transfer). In terms of biological role, catalyzes the transfer of the diacylglyceryl group from phosphatidylglycerol to the sulfhydryl group of the N-terminal cysteine of a prolipoprotein, the first step in the formation of mature lipoproteins. The polypeptide is Phosphatidylglycerol--prolipoprotein diacylglyceryl transferase (Vibrio campbellii (strain ATCC BAA-1116)).